Consider the following 736-residue polypeptide: MAETKVIYHLDEEETPYLVKVPVPATDIRLRDFKAALGRGHAKYFFKAMDQDFGVVKEEISDDNAKLPCFNDRVVSWLASSEGSQPDSAPPAPATEVRPEPPPPVPPPIPPPPAERTSGIGDSRPPSFHPNVSGSTEQLDQDNESVISMRRDRVRRRESSEQAGVGRGVNGRTERHLSGYESSSTLLTSEIETSICDSEEDDTMSRFSSSTEQSSASRLLKRHRRRRKQRPPRLERTSSFSSVTDSTMSLNIITVTLNMEKYNFLGISIVGQSNERGDGGIYIGSIMKGGAVAADGRIEPGDMLLQVNDINFENMSNDDAVRVLRDIVHKPGPIVLTVAKCWDPSPQGYFTLPRNEPIHPIDPAAWVSHSAALSGSFPVYPGSASMSSMTSSTSVTETELSHALPPVSLFSLSVHTDLASVVKVMASPESGLEVRDRMWLKITIPNAFLGSDVVDWLYHHVEGFQDRREARKFASNLLKAGFIRHTVNKITFSEQCYYIFGDLTGCENYMTNLSLNDNDGSSGASDQDTLAPLPLPGASPWPLLPTFSYQYQAPHPYSTQPPAYHELSSYSYGMGSAGSQHSEGSRSSGSNRSDGGRGMQKDDRSGVAGVGGGDSKSGSGSESEYSTRSSIRRVGGGEAGPPSERSTSSRLPPHHPPSVHSYAAPGVPLSYNPMMLMMMPPPPLPPPGVCPPNSSVPPGAPPLVRDLASVPPELTATRQSFHMAMGNPSEFFVDVM.

The DIX domain maps to Met1–Glu82. A disordered region spans residues Ala79–Ser241. The span at Glu100 to Ala114 shows a compositional bias: pro residues. Positions Met149–Ser160 are enriched in basic and acidic residues. The segment covering Glu181–Ile195 has biased composition (low complexity). A compositionally biased stretch (polar residues) spans Ser205–Ser217. Positions Leu219–Pro231 are enriched in basic residues. A PDZ domain is found at Thr254–Asp326. The tract at residues Ile327–Ser427 is interaction with custos. The DEP domain occupies Pro428–Asp502. Low complexity-rich tracts occupy residues Met574 to Ser593 and Lys616 to Ser629. The interval Met574–Ala664 is disordered.

The protein belongs to the DSH family. Can form homomultimers. Interacts with prickle1. Interacts (via PDZ domain) with ccdc88c/dal and dact1-B/dpr. Interacts (via DIX domain) with ARP/Axin-related protein and dact1-A/frodo. Interacts with sdc4, possibly via fz7. Interacts directly (via DEP domain) with efnb1/ephrin-B1 and indirectly with the phosphorylated ephrin receptors ephb1 and ephb2, via association with SH domain-containing adapters. May interact with lrrc6. Interacts with custos (via NLS1 and NLS2); the interaction is negatively regulated by Wnt stimulation. In terms of processing, phosphorylated. Phosphorylation is controlled by frizzled proteins, correlates with the onset of embryo dorsalizing events and is higher in the dorsal half of early cleavage embryos. Phosphorylated on tyrosine residues in response to association with efnb1/ephrin-B1. As to expression, expressed equally in both animal-vegetal and dorsal-ventral directions of the early blastula. Becomes enriched on the dorsal side of the embryo after cortical rotation. Expressed along the anterior margin of eye field of neurulae (stage 16 embryos) and in the anterolateral crescent that borders the eye field. Continues to be expressed in the optic cup at stage 26. Expressed in the central nervous system throughout the early tailbud stage including the entire hindbrain.

The protein localises to the cytoplasm. It localises to the cytoplasmic vesicle. It is found in the cell projection. The protein resides in the cilium. Its subcellular location is the nucleus. The protein localises to the cell membrane. In terms of biological role, involved in at least 2 independent signaling cascades, controlling cell fate via canonical Wnt signaling and cell polarity via a planar cell polarity (PCP) cascade. Acts synergistically with dal/dapple-like to activate Wnt signaling, stabilizing ctnnb1/beta-catenin and leading to dorsal axis formation. Also prevents degradation of ctnnb1/beta-catenin by displacing gsk3 from a complex with ARP/Axin-related protein. Has an additional role in anterior-posterior (A/P) axis formation, specifying different neuroectodermal cell fates along the A/P axis in a dose-dependent manner by activating several early patterning genes. In the PCP pathway, required at the cell membrane for PCP-mediated neural and mesodermal convergent extension during gastrulation and subsequent neural tube closure, acting to activate jnk. Also involved in blastopore closure and archenteron elongation during early, but not late, gastrulation. Associates with ephrin receptors and ligands and acts as part of a downstream PCP pathway to mediate ephrin-mediated cell repulsion via activation of rhoa. Required for efnb1/ephrin-B1-driven movement of non-retinal progenitor cells into the retina during eye field formation. Patterns the hindbrain. Required for ciliogenesis. Controls the docking of basal bodies to the apical plasma membrane; mediates the activation, but not localization of rhoa at the apical surface of ciliated cells during basal body docking. Furthermore, required for the association of basal bodies with membrane-bound vesicles and the vesicle-trafficking protein exoc4/sec8, and this association is in turn required for basal body docking. Once basal bodies are docked, required for the planar polarization of basal bodies that underlies ciliary beating and the directional fluid flow across ciliated epithelia. In Xenopus laevis (African clawed frog), this protein is Segment polarity protein dishevelled homolog DVL-2 (dvl2).